Here is a 414-residue protein sequence, read N- to C-terminus: ORC1-type DNA replication protein 1 (414 aa).

ATP contacts are provided by residues Thr-70–Ala-74, Tyr-213, and Arg-225.

This sequence belongs to the CDC6/cdc18 family.

Involved in regulation of DNA replication. The sequence is that of ORC1-type DNA replication protein 1 (cdc6-1) from Methanosarcina mazei (strain ATCC BAA-159 / DSM 3647 / Goe1 / Go1 / JCM 11833 / OCM 88) (Methanosarcina frisia).